The sequence spans 233 residues: MSEAKKLLAQGLWKNNSALVQLLGLCPLLAVSSTATNALGLGLATTLVLVCTNTAVSALRRWVPSEIRIPIYVMIIASVVSTVQMLINAYAFGLYQSLGIFIPLIVTNCIVIGRAEAYAAKNPVGLSALDGFAMGMGATCALFVLGALREILGNGTLFDGADMLLGSWATVLRIDILHLDTPFLLAMLPPGAFIGLGLLLAGKYVIDEKMKARKANTRVNVPQLQDGDAEKAL.

Transmembrane regions (helical) follow at residues 18–38 (ALVQ…ATNA), 39–59 (LGLG…VSAL), 69–89 (IPIY…LINA), 92–112 (FGLY…CIVI), 128–148 (ALDG…LGAL), and 182–202 (PFLL…LLAG).

This sequence belongs to the NqrDE/RnfAE family. In terms of assembly, the complex is composed of six subunits: RnfA, RnfB, RnfC, RnfD, RnfE and RnfG.

The protein localises to the cell inner membrane. Part of a membrane-bound complex that couples electron transfer with translocation of ions across the membrane. This chain is Ion-translocating oxidoreductase complex subunit E, found in Yersinia pseudotuberculosis serotype IB (strain PB1/+).